A 97-amino-acid polypeptide reads, in one-letter code: Alpha-latrotoxin associated low molecular weight protein 2 (97 aa).

The signal sequence occupies residues 1 to 19 (MFKLICIVFIATILSITSA). Disulfide bonds link Cys-36–Cys-72, Cys-52–Cys-68, and Cys-55–Cys-81.

This sequence belongs to the arthropod CHH/MIH/GIH/VIH hormone family. As to expression, expressed by the venom gland.

The protein resides in the secreted. Its function is as follows. May increase the toxicity of alpha-latrotoxin and/or other venom components. Is non-toxic to mice and to the cockroach Periplaneta americana. The sequence is that of Alpha-latrotoxin associated low molecular weight protein 2 from Steatoda grossa (False black widow).